Consider the following 346-residue polypeptide: O-methyltransferase atr3 (346 aa).

2 disordered regions span residues 1–22 and 52–88; these read MTSV…DDLM and GLKS…WYHA. S-adenosyl-L-methionine contacts are provided by residues 190-191 and 217-218; these read DL and DI.

It belongs to the class I-like SAM-binding methyltransferase superfamily. In terms of assembly, homodimer.

It carries out the reaction 4-O-demethylbarbatate + S-adenosyl-L-methionine = proatranorin I + S-adenosyl-L-homocysteine. It participates in secondary metabolite biosynthesis; terpenoid biosynthesis. O-methyltransferase; part of the gene cluster that mediates the biosynthesis of atranorin, a depside of polyketide origin that accumulates in the cortical or medullary layers of lichen thalli. Atr3 methylates the carboxyl group of 4-O-demethylbarbatic acid to yield proatranorin I. Atr3 is also able to methylate the atr2 product proatranorin III to produce the final compound atranorin. The first step in the pathway is performed by the non-reducing polyketide synthase atr1 that produces 4-O-demethylbarbatic acid composed of two 3-methylorsellinic acid (3MOA) moieties. The pathway continues with the actions of the cytochrome P450 monooygenase atr2 that catalizes the oxidation of c-9 and the O-methyltransferase atr3 that performs the methylation of the carboxyl group to yield atranorin, via the proatranorin II and III intermediates if atr2 acts first, or the proatranorin I intermediate if atr3 acts first. This chain is O-methyltransferase atr3, found in Stereocaulon alpinum (Alpine snow lichen).